Reading from the N-terminus, the 233-residue chain is Protein lin-7 homolog A (233 aa).

A Kinase interacting site motif is present at residues Met-14–Asp-28. In terms of domain architecture, L27 spans Leu-25–Gly-80. A PDZ domain is found at Val-108 to Pro-190. Residues Leu-214–Ser-233 form a disordered region.

This sequence belongs to the lin-7 family. As to quaternary structure, forms a complex with CASK and CASKIN1. Component of the brain-specific heterotrimeric complex (LIN-10-LIN-2-LIN-7 complex) composed of at least APBA1, CASK, and LIN7, which associates with the motor protein KIF17 to transport vesicles along microtubules. Can also interact with other modular proteins containing protein-protein interaction domains like PALS1, PALS2, MPP7, DLG1, DLG2 and DLG3 through its L27 domain. Interacts with DLG4, GRIN2B and MARCHF11 as well as CDH1 and CTNNB1, the channels KCNJ12/Kir2.2, KCNJ4/Kir2.3 and probably KCNJ2/Kir2.1 and SLC6A12/BGT-1 via its PDZ domain. The association of LIN7A with cadherin and beta-catenin is calcium-dependent, occurs at synaptic junctions and requires the actin cytoskeleton. Interacts with EGFR, ERBB2, ERBB3 and ERBB4 with both PDZ and KID domains. Associates with KIF17 via APBA1. Interacts with HTR4. Forms a tripartite complex composed of DLG1, MPP7 and LIN7 (LIN7A or LIN7C). In terms of tissue distribution, expressed in the kidney, along the length of the nephron.

It localises to the cell membrane. The protein localises to the basolateral cell membrane. Its subcellular location is the cell junction. The protein resides in the postsynaptic density membrane. It is found in the tight junction. Its function is as follows. Plays a role in establishing and maintaining the asymmetric distribution of channels and receptors at the plasma membrane of polarized cells. Forms membrane-associated multiprotein complexes that may regulate delivery and recycling of proteins to the correct membrane domains. The tripartite complex composed of LIN7 (LIN7A, LIN7B or LIN7C), CASK and APBA1 associates with the motor protein KIF17 to transport vesicles containing N-methyl-D-aspartate (NMDA) receptor subunit NR2B along microtubules. This complex may have the potential to couple synaptic vesicle exocytosis to cell adhesion in brain. Ensures the proper localization of GRIN2B (subunit 2B of the NMDA receptor) to neuronal postsynaptic density and may function in localizing synaptic vesicles at synapses where it is recruited by beta-catenin and cadherin. Required to localize Kir2 channels, GABA transporter (SLC6A12) and EGFR/ERBB1, ERBB2, ERBB3 and ERBB4 to the basolateral membrane of epithelial cells. The sequence is that of Protein lin-7 homolog A (Lin7a) from Mus musculus (Mouse).